Here is a 169-residue protein sequence, read N- to C-terminus: MPNHIVLYQPEIPANTGNISRTCAGTDTYLHLIRPLGFSTDDKMLKRAGLDYWDNVKLSYYDSLDEFFEKNAGGEFYYITKFGRHVYSDVDYSDPNKNYFFVFGKETTGLPDELLQANEENCLRIPMTDHIRSLNLSNTAAVLAYEALRQQSFGALLQEPNYDRKIFKD.

Residues isoleucine 79, glycine 104, isoleucine 125, and serine 133 each coordinate S-adenosyl-L-methionine.

The protein belongs to the class IV-like SAM-binding methyltransferase superfamily. RNA methyltransferase TrmH family. TrmL subfamily.

The protein resides in the cytoplasm. It catalyses the reaction cytidine(34) in tRNA + S-adenosyl-L-methionine = 2'-O-methylcytidine(34) in tRNA + S-adenosyl-L-homocysteine + H(+). It carries out the reaction 5-carboxymethylaminomethyluridine(34) in tRNA(Leu) + S-adenosyl-L-methionine = 5-carboxymethylaminomethyl-2'-O-methyluridine(34) in tRNA(Leu) + S-adenosyl-L-homocysteine + H(+). Could methylate the ribose at the nucleotide 34 wobble position in tRNA. The chain is Putative tRNA (cytidine(34)-2'-O)-methyltransferase from Listeria innocua serovar 6a (strain ATCC BAA-680 / CLIP 11262).